The following is a 182-amino-acid chain: Protein GrpE (182 aa).

The interval 1–35 (MTQENQTPPPEQENLAADPAVETTAETPAVKTPEQ) is disordered.

It belongs to the GrpE family. As to quaternary structure, homodimer.

The protein resides in the cytoplasm. Participates actively in the response to hyperosmotic and heat shock by preventing the aggregation of stress-denatured proteins, in association with DnaK and GrpE. It is the nucleotide exchange factor for DnaK and may function as a thermosensor. Unfolded proteins bind initially to DnaJ; upon interaction with the DnaJ-bound protein, DnaK hydrolyzes its bound ATP, resulting in the formation of a stable complex. GrpE releases ADP from DnaK; ATP binding to DnaK triggers the release of the substrate protein, thus completing the reaction cycle. Several rounds of ATP-dependent interactions between DnaJ, DnaK and GrpE are required for fully efficient folding. In Polynucleobacter necessarius subsp. necessarius (strain STIR1), this protein is Protein GrpE.